Reading from the N-terminus, the 102-residue chain is Acid shock protein (102 aa).

A signal peptide spans 1-21 (MKKVLALVVAAAMGLSSAAFA). The span at 22-41 (AETATTPAPTATTTKAAPAK) shows a compositional bias: low complexity. A propeptide spanning residues 22-58 (AETATTPAPTATTTKAAPAKTTHHKKQHKAAPAQKAQ) is cleaved from the precursor. The segment at 22–102 (AETATTPAPT…PAKPAAQPAA (81 aa)) is disordered. A compositionally biased stretch (basic residues) spans 80-90 (AAKKHARKHSH). The span at 91–102 (QQPAKPAAQPAA) shows a compositional bias: low complexity.

The protein belongs to the Asr family. In terms of processing, proteolytic processing gives rise to the active protein.

Its subcellular location is the periplasm. Functionally, required for growth and/or survival at acidic conditions. The chain is Acid shock protein from Escherichia coli O127:H6 (strain E2348/69 / EPEC).